A 156-amino-acid polypeptide reads, in one-letter code: Cyanate hydratase (156 aa).

Active-site residues include Arg96, Glu99, and Ser122.

Belongs to the cyanase family.

It carries out the reaction cyanate + hydrogencarbonate + 3 H(+) = NH4(+) + 2 CO2. In terms of biological role, catalyzes the reaction of cyanate with bicarbonate to produce ammonia and carbon dioxide. This is Cyanate hydratase from Pseudomonas fluorescens (strain ATCC BAA-477 / NRRL B-23932 / Pf-5).